The primary structure comprises 270 residues: Sorting nexin-11 (270 aa).

Positions 16–132 (VITVRVQDPR…HLFLQSQLSV (117 aa)) constitute a PX domain. The a 1,2-diacyl-sn-glycero-3-phospho-(1D-myo-inositol-3-phosphate) site is built by Arg59, Lys85, and Arg99. The tract at residues 135-139 (IEACV) is important for membrane trafficking. Residues 168 to 177 (SSSHLAKGDQ) show a composition bias toward basic and acidic residues. The interval 168–203 (SSSHLAKGDQPKSCCFLPRSGRRSSPSPPPSEEKDH) is disordered.

The protein belongs to the sorting nexin family. Monomer. Interacts with TRPV3; this interaction promotes TRPV3 trafficking from the cell membrane to lysosome for degradation.

The protein resides in the cell membrane. It is found in the endosome. The protein localises to the cytoplasm. In terms of biological role, phosphoinositide-binding protein involved in protein sorting and membrane trafficking in endosomes. Regulates the levels of TRPV3 by promoting its trafficking from the cell membrane to lysosome for degradation. In Homo sapiens (Human), this protein is Sorting nexin-11 (SNX11).